Consider the following 517-residue polypeptide: C-22 sterol desaturase ERG5 (517 aa).

A helical transmembrane segment spans residues 21 to 41; the sequence is LAVAKATGSPITTLFTIIFLI. Residue C458 participates in heme binding.

Belongs to the cytochrome P450 family. Requires heme as cofactor.

Its subcellular location is the endoplasmic reticulum membrane. It catalyses the reaction 5-dehydroepisterol + NADPH + O2 + H(+) = ergosta-5,7,22,24(28)-tetraen-3beta-ol + NADP(+) + 2 H2O. It participates in steroid metabolism; ergosterol biosynthesis; ergosterol from zymosterol: step 4/5. C-22 sterol desaturase; part of the third module of ergosterol biosynthesis pathway that includes the late steps of the pathway. ERG5 converts 5-dehydroepisterol into ergosta-5,7,22,24(28)-tetraen-3beta-ol by forming the C-22(23) double bond in the sterol side chain. The third module or late pathway involves the ergosterol synthesis itself through consecutive reactions that mainly occur in the endoplasmic reticulum (ER) membrane. Firstly, the squalene synthase ERG9 catalyzes the condensation of 2 farnesyl pyrophosphate moieties to form squalene, which is the precursor of all steroids. Squalene synthase is crucial for balancing the incorporation of farnesyl diphosphate (FPP) into sterol and nonsterol isoprene synthesis. Secondly, the squalene epoxidase ERG1 catalyzes the stereospecific oxidation of squalene to (S)-2,3-epoxysqualene, which is considered to be a rate-limiting enzyme in steroid biosynthesis. Then, the lanosterol synthase ERG7 catalyzes the cyclization of (S)-2,3 oxidosqualene to lanosterol, a reaction that forms the sterol core. In the next steps, lanosterol is transformed to zymosterol through a complex process involving various demethylation, reduction and desaturation reactions. The lanosterol 14-alpha-demethylase ERG11 (also known as CYP51) catalyzes C14-demethylation of lanosterol to produce 4,4'-dimethyl cholesta-8,14,24-triene-3-beta-ol, which is critical for ergosterol biosynthesis. The C-14 reductase ERG24 reduces the C14=C15 double bond of 4,4-dimethyl-cholesta-8,14,24-trienol to produce 4,4-dimethyl-cholesta-8,24-dienol. 4,4-dimethyl-cholesta-8,24-dienol is substrate of the C-4 demethylation complex ERG25-ERG26-ERG27 in which ERG25 catalyzes the three-step monooxygenation required for the demethylation of 4,4-dimethyl and 4alpha-methylsterols, ERG26 catalyzes the oxidative decarboxylation that results in a reduction of the 3-beta-hydroxy group at the C-3 carbon to an oxo group, and ERG27 is responsible for the reduction of the keto group on the C-3. ERG28 has a role as a scaffold to help anchor ERG25, ERG26 and ERG27 to the endoplasmic reticulum and ERG29 regulates the activity of the iron-containing C4-methylsterol oxidase ERG25. Then, the sterol 24-C-methyltransferase ERG6 catalyzes the methyl transfer from S-adenosyl-methionine to the C-24 of zymosterol to form fecosterol. The C-8 sterol isomerase ERG2 catalyzes the reaction which results in unsaturation at C-7 in the B ring of sterols and thus converts fecosterol to episterol. The sterol-C5-desaturase ERG3 then catalyzes the introduction of a C-5 double bond in the B ring to produce 5-dehydroepisterol. The C-22 sterol desaturase ERG5 further converts 5-dehydroepisterol into ergosta-5,7,22,24(28)-tetraen-3beta-ol by forming the C-22(23) double bond in the sterol side chain. Finally, ergosta-5,7,22,24(28)-tetraen-3beta-ol is substrate of the C-24(28) sterol reductase ERG4 to produce ergosterol. The protein is C-22 sterol desaturase ERG5 of Candida albicans (strain SC5314 / ATCC MYA-2876) (Yeast).